The chain runs to 368 residues: MDKPMKRIFVVLVILLVLPQLALAIRIKDIASFDGVRDNQLIGYGLIVGLNGTGDSDQTKFPVQSLANVLERMGITVNRDDIKVKNVAAVMVTAELPPFSKQGTRVDVLVSSLGDAKSLAGGTLLMTPLKGADGQVYAVAQGGLLTNSFSYGGQAATAQKNHPTAGRIPNGALVERELPNVLADRSQLRLNLHQPDFTTATRIARAVNEQFKAGVASCNDPGSVVISLPDAYQGRVVEFVADMERLEVRPDNPAKVVLNERTGTIVIGENVRIDTVAVSHGNLTLLIKETPRVSQPQPLSRTGETVVVPRTGIKVSEESGGLAVLREGASIGDVVRALNALGVTPRDLIGILQAIKAAGAMQAELSVI.

The first 24 residues, Met-1–Ala-24, serve as a signal peptide directing secretion.

The protein belongs to the FlgI family. In terms of assembly, the basal body constitutes a major portion of the flagellar organelle and consists of four rings (L,P,S, and M) mounted on a central rod.

The protein localises to the periplasm. The protein resides in the bacterial flagellum basal body. Assembles around the rod to form the L-ring and probably protects the motor/basal body from shearing forces during rotation. The polypeptide is Flagellar P-ring protein (Geobacter sulfurreducens (strain ATCC 51573 / DSM 12127 / PCA)).